Here is a 318-residue protein sequence, read N- to C-terminus: Ubiquinone biosynthesis protein COQ9, mitochondrial (318 aa).

A mitochondrion-targeting transit peptide spans 1–44; the sequence is MAAAAVSGALGRAGWRLLQLRCLPVARCRQALVPRAFHASAVGL. The short motif at 16 to 31 is the SIFI-degron element; the sequence is RLLQLRCLPVARCRQA. Residues 44–98 form a disordered region; the sequence is LRSSDEQKQQPPNSFSQQHSETQGAEKPDPESSHSPPRYTDQGGEEEEDYESEEQ. Residues 52–66 are compositionally biased toward polar residues; it reads QQPPNSFSQQHSETQ. Residues 86-97 show a composition bias toward acidic residues; sequence GGEEEEDYESEE. Lys-175 carries the post-translational modification N6-acetyllysine. Residue Arg-244 coordinates a 1,2-diacylglycero-3-phosphoethanolamine.

The protein belongs to the COQ9 family. Homodimer. Heterodimer; two heterodimers of COQ7:COQ9 come together on the same side of the lipid pseudo-bilayer and form a curved tetramer with a hydrophobic surface suitable for membrane interaction. These two tetramers assemble into a soluble octamer with a pseudo-bilayer of lipids captured within. Interacts with COQ7; this interaction allows ubiquinone (CoQ) isoprene intermediates presentation to COQ7 and facilitates the COQ7-mediated hydroxylase step. In response to mitochondrial stress, the precursor protein is ubiquitinated by the SIFI complex in the cytoplasm before mitochondrial import, leading to its degradation. Within the SIFI complex, UBR4 initiates ubiquitin chain that are further elongated or branched by KCMF1.

Its subcellular location is the mitochondrion. Its pathway is cofactor biosynthesis; ubiquinone biosynthesis. Its function is as follows. Membrane-associated protein that warps the membrane surface to access and bind aromatic isoprenes with high specificity, including ubiquinone (CoQ) isoprene intermediates and presents them directly to COQ7, therefore facilitating the COQ7-mediated hydroxylase step. Participates in the biosynthesis of coenzyme Q, also named ubiquinone, an essential lipid-soluble electron transporter for aerobic cellular respiration. This chain is Ubiquinone biosynthesis protein COQ9, mitochondrial, found in Homo sapiens (Human).